The following is a 496-amino-acid chain: RNA-binding motif protein, Y chromosome, family 1 member D (496 aa).

The RRM domain maps to 8–85 (GKLFIGGLNR…KAIKVEQAKK (78 aa)). Disordered regions lie at residues 67 to 349 (DMNG…HRDY) and 452 to 496 (KDQR…SSRY). 2 stretches are compositionally biased toward low complexity: residues 97-114 (PASS…SARG) and 149-159 (PVKRGPSSRSG). Residues 175-184 (NSWMGSQGPM) show a composition bias toward polar residues. Basic and acidic residues-rich tracts occupy residues 204 to 214 (RNDRMSTRHDG), 242 to 253 (DNGHSNRDEHSS), 276 to 289 (AYRD…DESY), 313 to 326 (GYRD…HESY), 335 to 349 (SSRE…HRDY), and 484 to 496 (GESR…SSRY).

Interacts with splicing factor proteins SFRS3/SRP20, TRA2B/SFRS10, KHDRBS1/SAM68 and KHDRBS3. Testis-specific.

It localises to the nucleus. Functionally, RNA-binding protein which may be involved in spermatogenesis. Required for sperm development, possibly by participating in pre-mRNA splicing in the testis. The sequence is that of RNA-binding motif protein, Y chromosome, family 1 member D (RBMY1D) from Homo sapiens (Human).